A 158-amino-acid chain; its full sequence is Cyclic pyranopterin monophosphate synthase (158 aa).

Substrate-binding positions include 75–77 and 113–114; these read LCH and ME. The active site involves D128.

This sequence belongs to the MoaC family. In terms of assembly, homohexamer; trimer of dimers.

It catalyses the reaction (8S)-3',8-cyclo-7,8-dihydroguanosine 5'-triphosphate = cyclic pyranopterin phosphate + diphosphate. It participates in cofactor biosynthesis; molybdopterin biosynthesis. Catalyzes the conversion of (8S)-3',8-cyclo-7,8-dihydroguanosine 5'-triphosphate to cyclic pyranopterin monophosphate (cPMP). This Histophilus somni (strain 129Pt) (Haemophilus somnus) protein is Cyclic pyranopterin monophosphate synthase.